The primary structure comprises 129 residues: M-zodatoxin-Lt8e (129 aa).

A signal peptide spans 1–20; that stretch reads MKYFVVALALVAAFVCIAES. A propeptide spanning residues 21–60 is cleaved from the precursor; it reads KPAESEHELAEVEEENELADLEDAVWLEHLADLSDLEEAR. A Processing quadruplet motif motif is present at residues 57–60; that stretch reads EEAR.

Cleavage of the propeptide depends on the processing quadruplet motif (XXXR, with at least one of X being E). As to expression, expressed by the venom gland.

The protein localises to the secreted. Insecticidal, cytolytic and antimicrobial peptide. Forms voltage-dependent, ion-permeable channels in membranes. At high concentration causes cell membrane lysis. This Lachesana tarabaevi (Spider) protein is M-zodatoxin-Lt8e (cit 1-5).